Consider the following 481-residue polypeptide: UDP-N-acetylmuramate--L-alanine ligase (481 aa).

Gly115–Thr121 provides a ligand contact to ATP.

The protein belongs to the MurCDEF family.

Its subcellular location is the cytoplasm. It catalyses the reaction UDP-N-acetyl-alpha-D-muramate + L-alanine + ATP = UDP-N-acetyl-alpha-D-muramoyl-L-alanine + ADP + phosphate + H(+). It functions in the pathway cell wall biogenesis; peptidoglycan biosynthesis. Cell wall formation. The chain is UDP-N-acetylmuramate--L-alanine ligase from Granulibacter bethesdensis (strain ATCC BAA-1260 / CGDNIH1).